We begin with the raw amino-acid sequence, 328 residues long: Ribosomal RNA large subunit methyltransferase F (328 aa).

The disordered stretch occupies residues 1–31; it reads MTDTRKPPRKKPQRPAKPAAPREKATLHPRN.

It belongs to the methyltransferase superfamily. METTL16/RlmF family.

The protein resides in the cytoplasm. The enzyme catalyses adenosine(1618) in 23S rRNA + S-adenosyl-L-methionine = N(6)-methyladenosine(1618) in 23S rRNA + S-adenosyl-L-homocysteine + H(+). Specifically methylates the adenine in position 1618 of 23S rRNA. The polypeptide is Ribosomal RNA large subunit methyltransferase F (Pseudomonas savastanoi pv. phaseolicola (strain 1448A / Race 6) (Pseudomonas syringae pv. phaseolicola (strain 1448A / Race 6))).